The sequence spans 170 residues: Inosine/xanthosine triphosphatase (170 aa).

The protein belongs to the YjjX NTPase family. Homodimer. Mg(2+) is required as a cofactor. The cofactor is Mn(2+).

It catalyses the reaction XTP + H2O = XDP + phosphate + H(+). The enzyme catalyses ITP + H2O = IDP + phosphate + H(+). In terms of biological role, phosphatase that hydrolyzes non-canonical purine nucleotides such as XTP and ITP to their respective diphosphate derivatives. Probably excludes non-canonical purines from DNA/RNA precursor pool, thus preventing their incorporation into DNA/RNA and avoiding chromosomal lesions. The protein is Inosine/xanthosine triphosphatase of Aliivibrio fischeri (strain ATCC 700601 / ES114) (Vibrio fischeri).